The chain runs to 750 residues: Photosystem I P700 chlorophyll a apoprotein A1 (750 aa).

Helical transmembrane passes span 70 to 93 (VFSAHFGQLSIIFLWLSGMYFHGA), 156 to 179 (LYCTAIGALIFAALMLFAGWFHYH), 195 to 219 (LNHHLAGLLGLGSLSWAGHQVHVSL), 291 to 309 (IAHHHLAIAILFLIAGHMY), 346 to 369 (WHAQLSLNLAMLGSLTIVVAHHMY), 385 to 411 (LSLFTHHMWIGGFLIVGAAAHAAIFMV), 433 to 455 (AIISHLNWACIFLGFHSFGLYIH), and 531 to 549 (FLVHHIHAFTIHVTVLILL). [4Fe-4S] cluster contacts are provided by cysteine 573 and cysteine 582. Helical transmembrane passes span 589–610 (HVFLGLFWMYNAISVVIFHFSW) and 664–686 (LSAYGLFFLGAHFVWAFSLMFLF). Histidine 675 contacts chlorophyll a'. Chlorophyll a-binding residues include methionine 683 and tyrosine 691. A phylloquinone-binding site is contributed by tryptophan 692. The helical transmembrane segment at 724–744 (AVGVTHYLLGGIATTWAFFLA) threads the bilayer.

Belongs to the PsaA/PsaB family. In terms of assembly, the PsaA/B heterodimer binds the P700 chlorophyll special pair and subsequent electron acceptors. PSI consists of a core antenna complex that captures photons, and an electron transfer chain that converts photonic excitation into a charge separation. The eukaryotic PSI reaction center is composed of at least 11 subunits. Requires P700 is a chlorophyll a/chlorophyll a' dimer, A0 is one or more chlorophyll a, A1 is one or both phylloquinones and FX is a shared 4Fe-4S iron-sulfur center. as cofactor.

The protein localises to the plastid. It is found in the chloroplast thylakoid membrane. The enzyme catalyses reduced [plastocyanin] + hnu + oxidized [2Fe-2S]-[ferredoxin] = oxidized [plastocyanin] + reduced [2Fe-2S]-[ferredoxin]. PsaA and PsaB bind P700, the primary electron donor of photosystem I (PSI), as well as the electron acceptors A0, A1 and FX. PSI is a plastocyanin-ferredoxin oxidoreductase, converting photonic excitation into a charge separation, which transfers an electron from the donor P700 chlorophyll pair to the spectroscopically characterized acceptors A0, A1, FX, FA and FB in turn. Oxidized P700 is reduced on the lumenal side of the thylakoid membrane by plastocyanin. In Panax ginseng (Korean ginseng), this protein is Photosystem I P700 chlorophyll a apoprotein A1.